The following is a 290-amino-acid chain: Small ribosomal subunit biogenesis GTPase RsgA (290 aa).

One can recognise a CP-type G domain in the interval 62-213; the sequence is KNSLVRPPIV…IADTPGFSSL (152 aa). GTP-binding positions include 111–114 and 156–164; these read SKTD and GQTGVGKTT. 4 residues coordinate Zn(2+): Cys237, Cys242, His244, and Cys250.

Belongs to the TRAFAC class YlqF/YawG GTPase family. RsgA subfamily. Monomer. Associates with 30S ribosomal subunit, binds 16S rRNA. Zn(2+) serves as cofactor.

The protein localises to the cytoplasm. Functionally, one of several proteins that assist in the late maturation steps of the functional core of the 30S ribosomal subunit. Helps release RbfA from mature subunits. May play a role in the assembly of ribosomal proteins into the subunit. Circularly permuted GTPase that catalyzes slow GTP hydrolysis, GTPase activity is stimulated by the 30S ribosomal subunit. The protein is Small ribosomal subunit biogenesis GTPase RsgA of Streptococcus mutans serotype c (strain ATCC 700610 / UA159).